Consider the following 463-residue polypeptide: Mitochondrial distribution and morphology protein 10 (463 aa).

Belongs to the MDM10 family. As to quaternary structure, component of the ER-mitochondria encounter structure (ERMES) or MDM complex, composed of MMM1, MDM10, MDM12 and MDM34. Associates with the mitochondrial outer membrane sorting assembly machinery SAM(core) complex.

The protein resides in the mitochondrion outer membrane. Its function is as follows. Component of the ERMES/MDM complex, which serves as a molecular tether to connect the endoplasmic reticulum and mitochondria. Components of this complex are involved in the control of mitochondrial shape and protein biogenesis and may function in phospholipid exchange. MDM10 is involved in the late assembly steps of the general translocase of the mitochondrial outer membrane (TOM complex). Functions in the TOM40-specific route of the assembly of outer membrane beta-barrel proteins, including the association of TOM40 with the receptor TOM22 and small TOM proteins. Can associate with the SAM(core) complex as well as the MDM12-MMM1 complex, both involved in late steps of the major beta-barrel assembly pathway, that is responsible for biogenesis of all outer membrane beta-barrel proteins. May act as a switch that shuttles between both complexes and channels precursor proteins into the TOM40-specific pathway. Plays a role in mitochondrial morphology and in the inheritance of mitochondria. This Candida dubliniensis (strain CD36 / ATCC MYA-646 / CBS 7987 / NCPF 3949 / NRRL Y-17841) (Yeast) protein is Mitochondrial distribution and morphology protein 10.